The chain runs to 155 residues: Small ribosomal subunit protein uS7 (155 aa).

Belongs to the universal ribosomal protein uS7 family. As to quaternary structure, part of the 30S ribosomal subunit. Contacts proteins S9 and S11.

In terms of biological role, one of the primary rRNA binding proteins, it binds directly to 16S rRNA where it nucleates assembly of the head domain of the 30S subunit. Is located at the subunit interface close to the decoding center, probably blocks exit of the E-site tRNA. In Prosthecochloris aestuarii (strain DSM 271 / SK 413), this protein is Small ribosomal subunit protein uS7.